The primary structure comprises 158 residues: Probable transcription regulator ArfM (158 aa).

Its function is as follows. Activates, in anaerobic conditions, the transcription of the fermentative operons lctEP and alsDS, of the hmp gene encoding a flavohemoglobin-like protein, the nitrite reductase operon nasDE and the heme biosynthesis genes hemN and hemZ. The polypeptide is Probable transcription regulator ArfM (arfM) (Bacillus subtilis (strain 168)).